We begin with the raw amino-acid sequence, 167 residues long: Lipoprotein signal peptidase (167 aa).

4 helical membrane-spanning segments follow: residues 8–28, 46–66, 70–90, and 101–121; these read TFLTSFLLVSLDWVSKLVVLL, WGHFSFLIVPSFNEGAAFGLF, KIPLLIFRVFVILCLFLFLGI, and IALTLILAGALGNVGDILFHG. Residues Asp-125 and Asp-143 contribute to the active site. A helical transmembrane segment spans residues 139-159; the sequence is FNLADAFISLGTLLLVGHLYF.

This sequence belongs to the peptidase A8 family.

Its subcellular location is the cell inner membrane. The catalysed reaction is Release of signal peptides from bacterial membrane prolipoproteins. Hydrolyzes -Xaa-Yaa-Zaa-|-(S,diacylglyceryl)Cys-, in which Xaa is hydrophobic (preferably Leu), and Yaa (Ala or Ser) and Zaa (Gly or Ala) have small, neutral side chains.. It functions in the pathway protein modification; lipoprotein biosynthesis (signal peptide cleavage). Functionally, this protein specifically catalyzes the removal of signal peptides from prolipoproteins. This chain is Lipoprotein signal peptidase, found in Chlamydia muridarum (strain MoPn / Nigg).